A 415-amino-acid chain; its full sequence is Gamma-glutamyl phosphate reductase (415 aa).

The protein belongs to the gamma-glutamyl phosphate reductase family.

The protein localises to the cytoplasm. The catalysed reaction is L-glutamate 5-semialdehyde + phosphate + NADP(+) = L-glutamyl 5-phosphate + NADPH + H(+). It participates in amino-acid biosynthesis; L-proline biosynthesis; L-glutamate 5-semialdehyde from L-glutamate: step 2/2. Catalyzes the NADPH-dependent reduction of L-glutamate 5-phosphate into L-glutamate 5-semialdehyde and phosphate. The product spontaneously undergoes cyclization to form 1-pyrroline-5-carboxylate. In Listeria monocytogenes serovar 1/2a (strain ATCC BAA-679 / EGD-e), this protein is Gamma-glutamyl phosphate reductase.